We begin with the raw amino-acid sequence, 510 residues long: 2,3-bisphosphoglycerate-independent phosphoglycerate mutase (510 aa).

The Mn(2+) site is built by Asp12 and Ser62. Residue Ser62 is the Phosphoserine intermediate of the active site. Residues His121, 151–152 (RD), Arg183, Arg189, 258–261 (RPDR), and Lys331 contribute to the substrate site. Mn(2+) is bound by residues Asp398, His402, Asp439, His440, and His458.

This sequence belongs to the BPG-independent phosphoglycerate mutase family. As to quaternary structure, monomer. Mn(2+) serves as cofactor.

It carries out the reaction (2R)-2-phosphoglycerate = (2R)-3-phosphoglycerate. It participates in carbohydrate degradation; glycolysis; pyruvate from D-glyceraldehyde 3-phosphate: step 3/5. Its function is as follows. Catalyzes the interconversion of 2-phosphoglycerate and 3-phosphoglycerate. The polypeptide is 2,3-bisphosphoglycerate-independent phosphoglycerate mutase (Clostridioides difficile (strain 630) (Peptoclostridium difficile)).